A 187-amino-acid chain; its full sequence is Benzene 1,2-dioxygenase subunit beta (187 aa).

It belongs to the bacterial ring-hydroxylating dioxygenase beta subunit family. As to quaternary structure, this dioxygenase system consists of four proteins: the two subunits of the hydroxylase component (BnzA and BnzB), a ferredoxin (BnzC) and a ferredoxin reductase (BnzD). Requires [2Fe-2S] cluster as cofactor. It depends on Fe cation as a cofactor.

The enzyme catalyses benzene + NADH + O2 + H(+) = cis-1,2-dihydrobenzene-1,2-diol + NAD(+). It carries out the reaction toluene + NADH + O2 + H(+) = (1S,2R)-3-methylcyclohexa-3,5-diene-1,2-diol + NAD(+). The protein operates within aromatic compound metabolism; benzene degradation; catechol from benzene: step 1/2. Its pathway is xenobiotic degradation; toluene degradation. It functions in the pathway xenobiotic degradation; xylene degradation. Functionally, catalyzes both the oxidation of benzene and toluene. The beta subunit may be responsible for the substrate specificity of the enzyme. This Pseudomonas putida (strain ATCC 700007 / DSM 6899 / JCM 31910 / BCRC 17059 / LMG 24140 / F1) protein is Benzene 1,2-dioxygenase subunit beta (bnzB).